A 368-amino-acid polypeptide reads, in one-letter code: Alanine racemase (368 aa).

Lysine 40 serves as the catalytic Proton acceptor; specific for D-alanine. Residue lysine 40 is modified to N6-(pyridoxal phosphate)lysine. Arginine 134 lines the substrate pocket. Tyrosine 263 serves as the catalytic Proton acceptor; specific for L-alanine. Methionine 310 contacts substrate.

It belongs to the alanine racemase family. The cofactor is pyridoxal 5'-phosphate.

The enzyme catalyses L-alanine = D-alanine. It participates in amino-acid biosynthesis; D-alanine biosynthesis; D-alanine from L-alanine: step 1/1. Its function is as follows. Catalyzes the interconversion of L-alanine and D-alanine. May also act on other amino acids. The polypeptide is Alanine racemase (alr) (Listeria monocytogenes serotype 4b (strain CLIP80459)).